Reading from the N-terminus, the 602-residue chain is Cytoskeleton-associated protein 4 (602 aa).

Residues 1–83 (MPSAKQRGSK…GGGGKSSSSS (83 aa)) are disordered. Over 1-106 (MPSAKQRGSK…SASCSRRLGR (106 aa)) the chain is Cytoplasmic. Phosphoserine occurs at positions 3, 17, and 19. Lys-21 bears the N6-acetyllysine mark. Residues 35-52 (KPPPAPQQPPPPPAPHPQ) are compositionally biased toward pro residues. A compositionally biased stretch (low complexity) spans 53 to 64 (QHPQQHPQNQAH). Cys-100 is lipidated: S-palmitoyl cysteine; by ZDHHC2. A helical transmembrane segment spans residues 107-127 (ALNFLFYLALVAAAAFSGWCV). Residues 128-602 (HHVLEEVQQV…VKVEKIHEKV (475 aa)) lie on the Extracellular side of the membrane. Positions 130 to 214 (VLEEVQQVRR…QKLQNEILKD (85 aa)) form a coiled coil. Ser-232 carries the post-translational modification Phosphoserine; by FAM20C. 2 coiled-coil regions span residues 256-460 (TEVQ…GLGS) and 533-602 (LSSL…HEKV). Ser-312 is subject to Phosphoserine.

As to quaternary structure, interacts with REEP5. Post-translationally, reversibly palmitoylated. Palmitoylation at Cys-100 by ZDHHC2 is required for its trafficking from the ER to the plasma membrane and for its perinuclear localization. Palmitoylation by ZDHHC2 is also required for its function in APF-mediated antiproliferative signaling. Increased phosphorylation during mitosis prevents binding to microtubules.

It is found in the endoplasmic reticulum membrane. It localises to the cell membrane. Its subcellular location is the cytoplasm. The protein localises to the cytoskeleton. The protein resides in the perinuclear region. In terms of biological role, mediates the anchoring of the endoplasmic reticulum to microtubules. Its function is as follows. High-affinity epithelial cell surface receptor for the FZD8-related low molecular weight sialoglycopeptide APF/antiproliferative factor. Mediates the APF antiproliferative signaling within cells. This is Cytoskeleton-associated protein 4 (CKAP4) from Homo sapiens (Human).